The sequence spans 121 residues: UPF0344 protein BCE_1257 (121 aa).

The next 4 helical transmembrane spans lie at Ile-6–Gly-26, Leu-38–Ala-58, Trp-65–Val-85, and Pro-92–Leu-112.

Belongs to the UPF0344 family.

The protein resides in the cell membrane. This Bacillus cereus (strain ATCC 10987 / NRS 248) protein is UPF0344 protein BCE_1257.